The chain runs to 160 residues: Nucleotide-binding protein CbuK_1936 (160 aa).

Belongs to the YajQ family.

Nucleotide-binding protein. The protein is Nucleotide-binding protein CbuK_1936 of Coxiella burnetii (strain CbuK_Q154) (Coxiella burnetii (strain Q154)).